We begin with the raw amino-acid sequence, 165 residues long: Xanthine-guanine phosphoribosyltransferase (165 aa).

5-phospho-alpha-D-ribose 1-diphosphate-binding positions include 41-42 and 98-106; these read RG and DDLTDTGKT. D99 is a Mg(2+) binding site. Guanine contacts are provided by D102 and I145. Xanthine is bound by residues D102 and I145. GMP is bound by residues 102 to 106 and 144 to 145; these read DTGKT and WI.

The protein belongs to the purine/pyrimidine phosphoribosyltransferase family. XGPT subfamily. In terms of assembly, homotetramer. Mg(2+) serves as cofactor.

It localises to the cell inner membrane. It catalyses the reaction GMP + diphosphate = guanine + 5-phospho-alpha-D-ribose 1-diphosphate. The catalysed reaction is XMP + diphosphate = xanthine + 5-phospho-alpha-D-ribose 1-diphosphate. It carries out the reaction IMP + diphosphate = hypoxanthine + 5-phospho-alpha-D-ribose 1-diphosphate. Its pathway is purine metabolism; GMP biosynthesis via salvage pathway; GMP from guanine: step 1/1. It participates in purine metabolism; XMP biosynthesis via salvage pathway; XMP from xanthine: step 1/1. Its function is as follows. Purine salvage pathway enzyme that catalyzes the transfer of the ribosyl-5-phosphate group from 5-phospho-alpha-D-ribose 1-diphosphate (PRPP) to the N9 position of the 6-oxopurines guanine and xanthine to form the corresponding ribonucleotides GMP (guanosine 5'-monophosphate) and XMP (xanthosine 5'-monophosphate), with the release of PPi. To a lesser extent, also acts on hypoxanthine. This chain is Xanthine-guanine phosphoribosyltransferase, found in Brucella canis (strain ATCC 23365 / NCTC 10854 / RM-666).